Here is a 392-residue protein sequence, read N- to C-terminus: F-box protein At5g65850 (392 aa).

Positions 29–78 (TEKSVQIPVDIIIEILLRLPAKSIATCRCVSKLWISVICRQDFTELFLTR) constitute an F-box domain.

The protein is F-box protein At5g65850 of Arabidopsis thaliana (Mouse-ear cress).